Here is a 76-residue protein sequence, read N- to C-terminus: U7-lycotoxin-Ls1b (76 aa).

Residues 1 to 22 (MKLISFTGLALLLIVSLIDVEA) form the signal peptide. The propeptide occupies 23-26 (QNEG).

This sequence belongs to the neurotoxin 19 (CSTX) family. 07 (U7-Lctx) subfamily. Contains 4 disulfide bonds. In terms of tissue distribution, expressed by the venom gland.

The protein resides in the secreted. The chain is U7-lycotoxin-Ls1b from Lycosa singoriensis (Wolf spider).